The following is a 361-amino-acid chain: MQKKILEYLKRLEEVEVEISNPEIFNNPKEYSLLSKEHARLSELKNTYDRVMAQEKVLSDDKQALAQEKDPEMIAMLEEGIQSGKAEVEKLYKILENLLVPPDPDDDLNVIMELRAGTGGDEAALFVGDCVRMYHLYASAKGWKYEVLSASESDIGGYKEYVMGISGTGVKRLLQYEAGTHRVQRVPETETQGRVHTSAITVAVLPEPAEDDEEVFIDEKDLKIDTFRASGAGGQHVNVTDSAVRITHLPTGVVVTCQDERSQHKNKAKAMRILKARIRDAEIQRRHKEASAMRSAQVGSGDRSERIRTYNFSQNRVTDHRIGLTLYSLDKVMEGDLDTITSALVSHAYHQLLQNGNEENS.

Residue Gln-235 is modified to N5-methylglutamine.

It belongs to the prokaryotic/mitochondrial release factor family. Post-translationally, methylated by PrmC. Methylation increases the termination efficiency of RF1.

It localises to the cytoplasm. Its function is as follows. Peptide chain release factor 1 directs the termination of translation in response to the peptide chain termination codons UAG and UAA. This Chlamydia abortus (strain DSM 27085 / S26/3) (Chlamydophila abortus) protein is Peptide chain release factor 1.